The following is a 163-amino-acid chain: Photosystem II extrinsic protein V (163 aa).

Residues 1 to 26 (MFRRLIGVVVATVLLTFQLIVGSATA) form the signal peptide. Positions 63, 66, 67, and 118 each coordinate heme c.

The protein belongs to the cytochrome c family. PsbV subfamily. In terms of assembly, PSII is composed of 1 copy each of membrane proteins PsbA, PsbB, PsbC, PsbD, PsbE, PsbF, PsbH, PsbI, PsbJ, PsbK, PsbL, PsbM, PsbT, PsbX, PsbY, PsbZ, Psb30/Ycf12, peripheral proteins PsbO, CyanoQ (PsbQ), PsbU, PsbV and a large number of cofactors. It forms dimeric complexes. It depends on heme c as a cofactor.

The protein localises to the cellular thylakoid membrane. In terms of biological role, one of the extrinsic, lumenal subunits of photosystem II (PSII). PSII is a light-driven water plastoquinone oxidoreductase, using light energy to abstract electrons from H(2)O, generating a proton gradient subsequently used for ATP formation. The extrinsic proteins stabilize the structure of photosystem II oxygen-evolving complex (OEC), the ion environment of oxygen evolution and protect the OEC against heat-induced inactivation. Low-potential cytochrome c that plays a role in the OEC of PSII. The sequence is that of Photosystem II extrinsic protein V from Trichormus variabilis (strain ATCC 29413 / PCC 7937) (Anabaena variabilis).